The primary structure comprises 138 residues: Cysteine desulfuration protein SufE (138 aa).

The active-site Cysteine persulfide intermediate is C51.

The protein belongs to the SufE family. As to quaternary structure, homodimer. Interacts with SufS.

It is found in the cytoplasm. It functions in the pathway cofactor biosynthesis; iron-sulfur cluster biosynthesis. In terms of biological role, participates in cysteine desulfuration mediated by SufS. Cysteine desulfuration mobilizes sulfur from L-cysteine to yield L-alanine and constitutes an essential step in sulfur metabolism for biosynthesis of a variety of sulfur-containing biomolecules. Functions as a sulfur acceptor for SufS, by mediating the direct transfer of the sulfur atom from the S-sulfanylcysteine of SufS, an intermediate product of cysteine desulfuration process. This is Cysteine desulfuration protein SufE from Escherichia coli O8 (strain IAI1).